A 246-amino-acid polypeptide reads, in one-letter code: DNA repair protein RecO (246 aa).

It belongs to the RecO family.

In terms of biological role, involved in DNA repair and RecF pathway recombination. The chain is DNA repair protein RecO from Proteus mirabilis (strain HI4320).